Reading from the N-terminus, the 546-residue chain is Thermosome subunit beta (546 aa).

Belongs to the TCP-1 chaperonin family. Forms a Heterooligomeric complex of two stacked eight-membered rings.

Its function is as follows. Molecular chaperone; binds unfolded polypeptides in vitro, and has a weak ATPase activity. The polypeptide is Thermosome subunit beta (thsB) (Thermococcus kodakarensis (strain ATCC BAA-918 / JCM 12380 / KOD1) (Pyrococcus kodakaraensis (strain KOD1))).